The following is a 795-amino-acid chain: MKFSESWVREWVNPAISTAQLCDQITMLGLEVDGVEKVAGDFSGVVVGEVVECAQHPDADKLRVTKVNVGGDRLLDIVCGAPNCRQGLKVACATEGAVLPGDFKIKKTKLRGQPSEGMLCSFSELGIDVESSGIIELPQNAPVGTNLRDYLTLDDNTVEISLTPNRADCLSIAGIAREIGVVNKLAVNTPHFESVKATITDKVDIQLHAPEACPRYLLRVVKNVNVQAPSPMWLQEKLRRCGIRSIDPVVDVTNYILLELGQPMHAFDAAKVAQPVQVRMAKSGEALVLLDGSTAKLKDNTLLIADQNGPLAMAGIFGGQASGVNAETKDIILEAAFFAPLAIAGRARQYGLHTDSSHRFERGVDFELQRQAMERATALLVEICGGEVGDICEVASDAFLPKLNQVSLRREKLDALLGHHIETETVTDILTRLGLQVSYANDVWQVTSASWRFDIEIEEDLVEEIARIYGYNSIPNKAPLAHLRMREHKEADLDLARIKTALVDADYQEAITYSFVDPKIQSVLHPQQDALVLPNPISVEMSAMRLSLLSGLLGAVQYNQNRQQTRVRLFETGLRFIPDTQAEFGVRQEFVLAAVMTGNKKAEHWAGKAESVDFFDLKGDLESILSLTGTRNLVKFVAKSYPALHPGQSAAIMLNGEEIGFIGTLHPNAAKQLGLNGKTVVFEILWQAIATRQVVQAKEISRFPANRRDLAIVVAESVAASDVLDACREVAGETLTQVNLFDVYQGNGVAEGHKSLAISLIIQDNEKTLEEDDINAVVSVVLSELKQRFNAYLRD.

The region spanning Ala-39–Arg-148 is the tRNA-binding domain. The B5 domain maps to Pro-401 to Asn-476. The Mg(2+) site is built by Asp-454, Asp-460, Glu-463, and Glu-464. An FDX-ACB domain is found at Ser-701–Arg-794.

This sequence belongs to the phenylalanyl-tRNA synthetase beta subunit family. Type 1 subfamily. As to quaternary structure, tetramer of two alpha and two beta subunits. Requires Mg(2+) as cofactor.

Its subcellular location is the cytoplasm. The enzyme catalyses tRNA(Phe) + L-phenylalanine + ATP = L-phenylalanyl-tRNA(Phe) + AMP + diphosphate + H(+). In Pasteurella multocida (strain Pm70), this protein is Phenylalanine--tRNA ligase beta subunit (pheT).